A 332-amino-acid chain; its full sequence is uncharacterized protein (332 aa).

An N-terminal signal peptide occupies residues 1–23 (MKRIPSLIIGLLLILATWHSVLA). A helical membrane pass occupies residues 231-251 (SFFLGMIVTLIILAPVILYLW).

It localises to the membrane. This is an uncharacterized protein from Pyrococcus horikoshii (strain ATCC 700860 / DSM 12428 / JCM 9974 / NBRC 100139 / OT-3).